The sequence spans 239 residues: LexA repressor (239 aa).

Positions 26–46 form a DNA-binding region, H-T-H motif; the sequence is FDEMKDALDLASKSGIHRLIT. Active-site for autocatalytic cleavage activity residues include Ser-159 and Lys-197.

The protein belongs to the peptidase S24 family. As to quaternary structure, homodimer.

It carries out the reaction Hydrolysis of Ala-|-Gly bond in repressor LexA.. In terms of biological role, represses a number of genes involved in the response to DNA damage (SOS response), including recA and lexA. In the presence of single-stranded DNA, RecA interacts with LexA causing an autocatalytic cleavage which disrupts the DNA-binding part of LexA, leading to derepression of the SOS regulon and eventually DNA repair. The chain is LexA repressor from Rhizobium etli (strain ATCC 51251 / DSM 11541 / JCM 21823 / NBRC 15573 / CFN 42).